The primary structure comprises 462 residues: Argininosuccinate lyase (462 aa).

It belongs to the lyase 1 family. Argininosuccinate lyase subfamily.

It localises to the cytoplasm. The enzyme catalyses 2-(N(omega)-L-arginino)succinate = fumarate + L-arginine. It participates in amino-acid biosynthesis; L-arginine biosynthesis; L-arginine from L-ornithine and carbamoyl phosphate: step 3/3. The chain is Argininosuccinate lyase from Bacillus cereus (strain ZK / E33L).